Consider the following 657-residue polypeptide: Tyrosine-protein phosphatase vhp-1 (657 aa).

In terms of domain architecture, Rhodanese spans 21-151 (APDTTLVVDC…FAQQYPQLCE (131 aa)). A Tyrosine-protein phosphatase domain is found at 175-318 (GITLITPNIY…LLEYENVLIK (144 aa)). C262 serves as the catalytic Phosphocysteine intermediate. Disordered regions lie at residues 353 to 426 (SNCV…MDLG), 539 to 563 (VPAG…SSSA), and 581 to 657 (PAST…PCHQ). The span at 366 to 405 (SPSSPSVSEGSAASEPETSSSAASSSSTASAPPSMPSTSE) shows a compositional bias: low complexity. Residues 406 to 419 (QGTSSGTVNVNGKR) show a composition bias toward polar residues. Composition is skewed to low complexity over residues 542-563 (GSSS…SSSA) and 581-597 (PAST…TSRA).

Belongs to the protein-tyrosine phosphatase family. Non-receptor class dual specificity subfamily. In terms of assembly, may interact with pmk-3. As to expression, expressed in the pharynx, intestine, neurons and vulval hypodermal cells.

It carries out the reaction O-phospho-L-tyrosyl-[protein] + H2O = L-tyrosyl-[protein] + phosphate. Its function is as follows. Acts preferentially on the c-Jun N-terminal kinase (JNK) and p38 MAPKs. Plays an important role in the heavy metal stress response and in axon regeneration by negatively regulating the kgb-1 (JNK-like) and the pmk-1 (p38-type) MAPK signaling pathways. This chain is Tyrosine-protein phosphatase vhp-1 (vhp-1), found in Caenorhabditis elegans.